We begin with the raw amino-acid sequence, 104 residues long: Co-chaperonin GroES 1 (104 aa).

Belongs to the GroES chaperonin family. In terms of assembly, heptamer of 7 subunits arranged in a ring. Interacts with the chaperonin GroEL.

The protein resides in the cytoplasm. Its function is as follows. Together with the chaperonin GroEL, plays an essential role in assisting protein folding. The GroEL-GroES system forms a nano-cage that allows encapsulation of the non-native substrate proteins and provides a physical environment optimized to promote and accelerate protein folding. GroES binds to the apical surface of the GroEL ring, thereby capping the opening of the GroEL channel. This is Co-chaperonin GroES 1 from Mesorhizobium japonicum (strain LMG 29417 / CECT 9101 / MAFF 303099) (Mesorhizobium loti (strain MAFF 303099)).